A 92-amino-acid polypeptide reads, in one-letter code: Dolichol-phosphate mannosyltransferase subunit 3 (92 aa).

The next 2 helical transmembrane spans lie at 8–28 (LWAL…ALGL) and 37–57 (VLWP…LGTV).

This sequence belongs to the DPM3 family. Component of the dolichol-phosphate mannose (DPM) synthase complex composed of DPM1, DPM2 and DPM3; within the complex, associates with DPM1 via its C-terminal domain and with DPM2 via its N-terminal portion. This interaction stabilizes DPM1 protein.

The protein resides in the endoplasmic reticulum membrane. It participates in protein modification; protein glycosylation. In terms of biological role, stabilizer subunit of the dolichol-phosphate mannose (DPM) synthase complex; tethers catalytic subunit DPM1 to the endoplasmic reticulum. The sequence is that of Dolichol-phosphate mannosyltransferase subunit 3 (DPM3) from Bos taurus (Bovine).